The chain runs to 190 residues: Holliday junction branch migration complex subunit RuvA (190 aa).

The tract at residues 1-64 (MIGRITGTLI…EDAHLLYGFG (64 aa)) is domain I. The domain II stretch occupies residues 65-137 (TASERAAFRE…MRGKLGADIG (73 aa)). A flexible linker region spans residues 137–141 (GATPH). Residues 142–190 (AVPDSQSDILNALLALGYSEKESLAALKTLPEGLGVSDGIRQALKALAR) form a domain III region.

Belongs to the RuvA family. In terms of assembly, homotetramer. Forms an RuvA(8)-RuvB(12)-Holliday junction (HJ) complex. HJ DNA is sandwiched between 2 RuvA tetramers; dsDNA enters through RuvA and exits via RuvB. An RuvB hexamer assembles on each DNA strand where it exits the tetramer. Each RuvB hexamer is contacted by two RuvA subunits (via domain III) on 2 adjacent RuvB subunits; this complex drives branch migration. In the full resolvosome a probable DNA-RuvA(4)-RuvB(12)-RuvC(2) complex forms which resolves the HJ.

It is found in the cytoplasm. In terms of biological role, the RuvA-RuvB-RuvC complex processes Holliday junction (HJ) DNA during genetic recombination and DNA repair, while the RuvA-RuvB complex plays an important role in the rescue of blocked DNA replication forks via replication fork reversal (RFR). RuvA specifically binds to HJ cruciform DNA, conferring on it an open structure. The RuvB hexamer acts as an ATP-dependent pump, pulling dsDNA into and through the RuvAB complex. HJ branch migration allows RuvC to scan DNA until it finds its consensus sequence, where it cleaves and resolves the cruciform DNA. The sequence is that of Holliday junction branch migration complex subunit RuvA from Bordetella avium (strain 197N).